The chain runs to 185 residues: Large ribosomal subunit protein uL5 (185 aa).

Belongs to the universal ribosomal protein uL5 family. Part of the 50S ribosomal subunit; part of the 5S rRNA/L5/L18/L25 subcomplex. Contacts the 5S rRNA and the P site tRNA. Forms a bridge to the 30S subunit in the 70S ribosome.

In terms of biological role, this is one of the proteins that bind and probably mediate the attachment of the 5S RNA into the large ribosomal subunit, where it forms part of the central protuberance. In the 70S ribosome it contacts protein S13 of the 30S subunit (bridge B1b), connecting the 2 subunits; this bridge is implicated in subunit movement. Contacts the P site tRNA; the 5S rRNA and some of its associated proteins might help stabilize positioning of ribosome-bound tRNAs. The chain is Large ribosomal subunit protein uL5 from Caulobacter vibrioides (strain NA1000 / CB15N) (Caulobacter crescentus).